Consider the following 427-residue polypeptide: Sperm-associated antigen 1A (427 aa).

The tract at residues 46-113 (QKKGPGYREG…GPGSAGESCN (68 aa)) is disordered. TPR repeat units follow at residues 125-158 (LARL…CIEA), 167-200 (CVLY…HPFS), 202-234 (KPLL…DISV), 302-335 (FTIL…KPNE), 336-369 (CAIY…EPKN), and 371-403 (KAFY…DPNV).

The protein resides in the cytoplasm. The protein localises to the dynein axonemal particle. Functionally, may play a role in the cytoplasmic assembly and/or trafficking of the axonemal dynein arms. The protein is Sperm-associated antigen 1A (spag1a) of Danio rerio (Zebrafish).